The sequence spans 612 residues: Dihydroxy-acid dehydratase (612 aa).

D81 is a Mg(2+) binding site. C122 is a binding site for [2Fe-2S] cluster. Residues D123 and K124 each contribute to the Mg(2+) site. K124 is modified (N6-carboxylysine). C193 is a binding site for [2Fe-2S] cluster. Residue E489 participates in Mg(2+) binding. S515 serves as the catalytic Proton acceptor.

It belongs to the IlvD/Edd family. In terms of assembly, homodimer. [2Fe-2S] cluster serves as cofactor. Requires Mg(2+) as cofactor.

The catalysed reaction is (2R)-2,3-dihydroxy-3-methylbutanoate = 3-methyl-2-oxobutanoate + H2O. It catalyses the reaction (2R,3R)-2,3-dihydroxy-3-methylpentanoate = (S)-3-methyl-2-oxopentanoate + H2O. It functions in the pathway amino-acid biosynthesis; L-isoleucine biosynthesis; L-isoleucine from 2-oxobutanoate: step 3/4. The protein operates within amino-acid biosynthesis; L-valine biosynthesis; L-valine from pyruvate: step 3/4. In terms of biological role, functions in the biosynthesis of branched-chain amino acids. Catalyzes the dehydration of (2R,3R)-2,3-dihydroxy-3-methylpentanoate (2,3-dihydroxy-3-methylvalerate) into 2-oxo-3-methylpentanoate (2-oxo-3-methylvalerate) and of (2R)-2,3-dihydroxy-3-methylbutanoate (2,3-dihydroxyisovalerate) into 2-oxo-3-methylbutanoate (2-oxoisovalerate), the penultimate precursor to L-isoleucine and L-valine, respectively. This Xanthomonas campestris pv. campestris (strain B100) protein is Dihydroxy-acid dehydratase.